The chain runs to 159 residues: Histone H1 (159 aa).

Disordered stretches follow at residues Met-1 to Leu-31, Lys-80 to Lys-99, and Ala-132 to Ser-159. Positions Val-10–Arg-22 are enriched in basic residues. An H15 domain is found at Thr-12–Ala-102. A compositionally biased stretch (gly residues) spans Cys-84–Gly-93. Positions Lys-134–Lys-148 are enriched in basic residues. Positions Lys-149–Ser-159 are enriched in basic and acidic residues.

The protein belongs to the histone H1/H5 family.

The protein resides in the nucleus. It is found in the chromosome. In terms of biological role, histones H1 are necessary for the condensation of nucleosome chains into higher-order structures. In Psammechinus miliaris (Green sea urchin), this protein is Histone H1.